A 310-amino-acid polypeptide reads, in one-letter code: Vomeronasal type-1 receptor 3 (310 aa).

The Extracellular portion of the chain corresponds to 1–5 (MASKD). Residues 6 to 26 (FAIGMILSQIMVGFLGNFFLL) form a helical membrane-spanning segment. Residues 27–50 (YHYSFLHFTRGMLQSTDLTLKHLT) are Cytoplasmic-facing. Residues 51–71 (IANSLVILSKGIPQTMAAFGL) form a helical membrane-spanning segment. At 72-91 (KDSLSDIGCKFVFYVHRVGR) the chain is on the extracellular side. Residues 92 to 112 (AVCTGNACLLSVFQVITISSS) form a helical membrane-spanning segment. Residues 113 to 129 (EFRWAELKLHAHKYIRS) lie on the Cytoplasmic side of the membrane. The chain crosses the membrane as a helical span at residues 130-150 (FILVLCWILNTLVNITVPLHV). At 151-186 (TGKWNSINSTKTNDYGYCSGGSRSRIPHSLHIVLLS) the chain is on the extracellular side. Asn-158 is a glycosylation site (N-linked (GlcNAc...) asparagine). The chain crosses the membrane as a helical span at residues 187–207 (SLDVLCLGLMTLASGSMVFIL). Residues 208-235 (HRLKQQVQHIHGTNLSPRSSPESRVTQS) lie on the Cytoplasmic side of the membrane. A helical transmembrane segment spans residues 236–258 (ILVLVSTLCYFTRSPPSLHMSLF). Residues 259–263 (PNPSW) lie on the Extracellular side of the membrane. A helical membrane pass occupies residues 264–284 (WPLNASALITACFPTVSPFVL). Residues 285-310 (MSRHPRIPRLGSACCGRNPQFPKLVR) lie on the Cytoplasmic side of the membrane.

Belongs to the G-protein coupled receptor 1 family.

The protein localises to the cell membrane. Its function is as follows. Putative pheromone receptor. This chain is Vomeronasal type-1 receptor 3 (VN1R3), found in Pan troglodytes (Chimpanzee).